We begin with the raw amino-acid sequence, 342 residues long: Flagellar P-ring protein (342 aa).

Residues 1–19 (MKRVFLWLIFVLAFHKLLA) form the signal peptide.

It belongs to the FlgI family. As to quaternary structure, the basal body constitutes a major portion of the flagellar organelle and consists of four rings (L,P,S, and M) mounted on a central rod.

Its subcellular location is the periplasm. It localises to the bacterial flagellum basal body. In terms of biological role, assembles around the rod to form the L-ring and probably protects the motor/basal body from shearing forces during rotation. This Helicobacter pylori (strain G27) protein is Flagellar P-ring protein.